We begin with the raw amino-acid sequence, 221 residues long: MSSSQKKAGGKAGKPTKRSQNYAALRKARLPKPPALKVPVAKPTNTILPQTGCVWQSLGTPLSLSSFNGLGVRFLYSFLKDFAGPRILEEDLIYRMVFSITPSHAGTFCLTDDVTTEDGRAVAHGNPMQEFPHGAFHANEKFGFELVFTAPTHAGMQNQNFKHSYAVALCLDFDAQPEGSKNPSYRFNEVWVERKAFPRAGPLRSLITVGLLDEADDLDRH.

The interval 1-24 is disordered; it reads MSSSQKKAGGKAGKPTKRSQNYAA. Ser2 carries the post-translational modification N-acetylserine; by host.

The protein belongs to the alphamovirus/ilarvirus capsid protein family.

It localises to the virion. In terms of biological role, capsid protein. Binds to the to the 3' end of the nonpolyadenylated viral RNA and is involved in viral RNA translation initiation. Probably binds RNA and plays a role in packaging. The polypeptide is Capsid protein (Alfalfa mosaic virus (strain YSMV)).